The primary structure comprises 534 residues: Cytochalasin cluster regulator ccsR (534 aa).

Positions 13-54 (CDRCRRQKLRCVRPLKHGACEHPNNIEALEPCERCSRAGTPC) form a DNA-binding region, zn(2)-C6 fungal-type. Disordered stretches follow at residues 88-170 (IPKQ…LDAP) and 350-378 (TSARPEFRDSSDMCASSSNRDSSDLSAAS). The segment covering 109-125 (TGQNKGINDANAVTGSL) has biased composition (polar residues). Positions 130–146 (PDHRSGSNVHRQPEARP) are enriched in basic and acidic residues. Residues 361-378 (DMCASSSNRDSSDLSAAS) show a composition bias toward low complexity.

The protein localises to the nucleus. Functionally, transcription factor involved in regulation of gene cluster that mediates the biosynthesis of the mycotoxins cytochalasins E and K. This chain is Cytochalasin cluster regulator ccsR, found in Aspergillus clavatus (strain ATCC 1007 / CBS 513.65 / DSM 816 / NCTC 3887 / NRRL 1 / QM 1276 / 107).